A 364-amino-acid chain; its full sequence is DNA replication and repair protein RecF (364 aa).

Position 30 to 37 (Gly-30 to Thr-37) interacts with ATP.

The protein belongs to the RecF family.

Its subcellular location is the cytoplasm. The RecF protein is involved in DNA metabolism; it is required for DNA replication and normal SOS inducibility. RecF binds preferentially to single-stranded, linear DNA. It also seems to bind ATP. The chain is DNA replication and repair protein RecF from Stenotrophomonas maltophilia (strain K279a).